The following is a 272-amino-acid chain: Shikimate dehydrogenase (NADP(+)) (272 aa).

Residues 14–16 (SKS) and Thr-61 each bind shikimate. The active-site Proton acceptor is Lys-65. Residue Glu-77 participates in NADP(+) binding. 2 residues coordinate shikimate: Asn-86 and Asp-102. Residues 126–130 (GAGGA), 149–154 (NRTVSR), and Met-213 contribute to the NADP(+) site. Tyr-215 contacts shikimate. NADP(+) is bound at residue Gly-237.

The protein belongs to the shikimate dehydrogenase family. In terms of assembly, homodimer.

It catalyses the reaction shikimate + NADP(+) = 3-dehydroshikimate + NADPH + H(+). It participates in metabolic intermediate biosynthesis; chorismate biosynthesis; chorismate from D-erythrose 4-phosphate and phosphoenolpyruvate: step 4/7. Functionally, involved in the biosynthesis of the chorismate, which leads to the biosynthesis of aromatic amino acids. Catalyzes the reversible NADPH linked reduction of 3-dehydroshikimate (DHSA) to yield shikimate (SA). The sequence is that of Shikimate dehydrogenase (NADP(+)) from Escherichia coli O81 (strain ED1a).